A 154-amino-acid polypeptide reads, in one-letter code: Protein X (154 aa).

Residues 68 to 117 (PCALRFTSARRMETTVNAHQILPKVLHKRTLGLSAMSTTDLEAYFKDCLF) are mitochondrial targeting sequence.

Belongs to the orthohepadnavirus protein X family. As to quaternary structure, may form homodimer. May interact with host CEBPA, CFLAR, CREB1, DDB1, E4F1, HBXIP, HSPD1/HSP60, NFKBIA, POLR2E and SMAD4. Interacts with host SMC5-SMC6 complex and induces its degradation. Interacts with host TRPC4AP; leading to prevent ubiquitination of TRPC4AP. Interacts with host PLSCR1; this interaction promotes ubiquitination and degradation of HBx and impairs HBx-mediated cell proliferation. In terms of processing, a fraction may be phosphorylated in insect cells and HepG2 cells, a human hepatoblastoma cell line. Phosphorylated in vitro by host protein kinase C or mitogen-activated protein kinase. N-acetylated in insect cells.

The protein localises to the host cytoplasm. It localises to the host nucleus. The protein resides in the host mitochondrion. Functionally, multifunctional protein that plays a role in silencing host antiviral defenses and promoting viral transcription. Does not seem to be essential for HBV infection. May be directly involved in development of cirrhosis and liver cancer (hepatocellular carcinoma). Most of cytosolic activities involve modulation of cytosolic calcium. The effect on apoptosis is controversial depending on the cell types in which the studies have been conducted. May induce apoptosis by localizing in mitochondria and causing loss of mitochondrial membrane potential. May also modulate apoptosis by binding host CFLAR, a key regulator of the death-inducing signaling complex (DISC). Promotes viral transcription by using the host E3 ubiquitin ligase DDB1 to target the SMC5-SMC6 complex to proteasomal degradation. This host complex would otherwise bind to viral episomal DNA, and prevents its transcription. Moderately stimulates transcription of many different viral and cellular transcription elements. Promoters and enhancers stimulated by HBx contain DNA binding sites for NF-kappa-B, AP-1, AP-2, c-EBP, ATF/CREB, or the calcium-activated factor NF-AT. The sequence is that of Protein X from Hepatitis B virus genotype E subtype ayw4 (isolate Kou) (HBV-E).